We begin with the raw amino-acid sequence, 363 residues long: 3-dehydroquinate synthase (363 aa).

NAD(+)-binding positions include 74 to 79 (DGEQYK), 108 to 112 (GVIGD), 132 to 133 (TT), Lys145, Lys154, and 172 to 175 (CLKT). Zn(2+) is bound by residues Glu187, His250, and His267.

It belongs to the sugar phosphate cyclases superfamily. Dehydroquinate synthase family. NAD(+) serves as cofactor. Co(2+) is required as a cofactor. Requires Zn(2+) as cofactor.

Its subcellular location is the cytoplasm. It catalyses the reaction 7-phospho-2-dehydro-3-deoxy-D-arabino-heptonate = 3-dehydroquinate + phosphate. Its pathway is metabolic intermediate biosynthesis; chorismate biosynthesis; chorismate from D-erythrose 4-phosphate and phosphoenolpyruvate: step 2/7. Functionally, catalyzes the conversion of 3-deoxy-D-arabino-heptulosonate 7-phosphate (DAHP) to dehydroquinate (DHQ). In Buchnera aphidicola subsp. Acyrthosiphon pisum (strain APS) (Acyrthosiphon pisum symbiotic bacterium), this protein is 3-dehydroquinate synthase.